The sequence spans 235 residues: Secretory carrier-associated membrane protein 5B (235 aa).

Over 1–39 (MSDKPNNFPPLPRFIPLKPCFYQDFDTDIPDVHRTTAKR) the chain is Cytoplasmic. Residues 40 to 60 (LYYLWMLNSITLGVNLIGCLA) traverse the membrane as a helical segment. Over 61-67 (WLIGGGG) the chain is Extracellular. Residues 68-88 (ATNFGLAFLWLILFTPCSYVC) form a helical membrane-spanning segment. Residues 89 to 102 (WFRPIYKAFKTDSS) lie on the Cytoplasmic side of the membrane. A helical membrane pass occupies residues 103 to 125 (FNFMAFFFTFTGQLVISIIQAVG). At 126-148 (IPGWGVCGWIASISFFGTNVGSA) the chain is on the extracellular side. Residues 149–169 (VVMLIPTIMFTAVAVLSFVAL) traverse the membrane as a helical segment. The Cytoplasmic segment spans residues 170–235 (TKVHRFYRGA…TPNYGYSNQM (66 aa)).

This sequence belongs to the SCAMP family. SCAMP5 subfamily.

The protein localises to the cell membrane. It localises to the golgi apparatus membrane. Its subcellular location is the golgi apparatus. The protein resides in the trans-Golgi network membrane. It is found in the recycling endosome membrane. The protein localises to the cytoplasmic vesicle. It localises to the secretory vesicle. Its subcellular location is the synaptic vesicle membrane. Its function is as follows. Required for the calcium-dependent exocytosis of signal sequence-containing cytokines. Probably acts in cooperation with the SNARE machinery. This chain is Secretory carrier-associated membrane protein 5B (scamp5-b), found in Xenopus laevis (African clawed frog).